Here is a 66-residue protein sequence, read N- to C-terminus: Large ribosomal subunit protein bL35 (66 aa).

The span at 1 to 16 shows a compositional bias: basic residues; that stretch reads MPKMKTHKGSAKRFKK. The segment at 1–24 is disordered; that stretch reads MPKMKTHKGSAKRFKKTGTGQLKR.

It belongs to the bacterial ribosomal protein bL35 family.

The protein is Large ribosomal subunit protein bL35 of Anoxybacillus flavithermus (strain DSM 21510 / WK1).